The following is a 144-amino-acid chain: Large ribosomal subunit protein uL15 (144 aa).

Residues 1–53 form a disordered region; sequence MRLNTLSPAEGAKHAPKRLGRGIGSGLGKTGGRGHKGQKSRSGGGVRRGFEGG. A compositionally biased stretch (gly residues) spans 21–31; that stretch reads RGIGSGLGKTG.

Belongs to the universal ribosomal protein uL15 family. As to quaternary structure, part of the 50S ribosomal subunit.

Functionally, binds to the 23S rRNA. In Pectobacterium carotovorum subsp. carotovorum (strain PC1), this protein is Large ribosomal subunit protein uL15.